Consider the following 427-residue polypeptide: 3-phosphoshikimate 1-carboxyvinyltransferase (427 aa).

3 residues coordinate 3-phosphoshikimate: lysine 22, serine 23, and arginine 27. Lysine 22 serves as a coordination point for phosphoenolpyruvate. Glycine 96 and arginine 124 together coordinate phosphoenolpyruvate. Serine 169, serine 170, glutamine 171, serine 197, aspartate 313, asparagine 336, and lysine 340 together coordinate 3-phosphoshikimate. Glutamine 171 provides a ligand contact to phosphoenolpyruvate. Residue aspartate 313 is the Proton acceptor of the active site. Positions 344, 386, and 411 each coordinate phosphoenolpyruvate.

It belongs to the EPSP synthase family. In terms of assembly, monomer.

It localises to the cytoplasm. The catalysed reaction is 3-phosphoshikimate + phosphoenolpyruvate = 5-O-(1-carboxyvinyl)-3-phosphoshikimate + phosphate. The protein operates within metabolic intermediate biosynthesis; chorismate biosynthesis; chorismate from D-erythrose 4-phosphate and phosphoenolpyruvate: step 6/7. Its function is as follows. Catalyzes the transfer of the enolpyruvyl moiety of phosphoenolpyruvate (PEP) to the 5-hydroxyl of shikimate-3-phosphate (S3P) to produce enolpyruvyl shikimate-3-phosphate and inorganic phosphate. The chain is 3-phosphoshikimate 1-carboxyvinyltransferase from Escherichia coli O1:K1 / APEC.